We begin with the raw amino-acid sequence, 584 residues long: Proteasome-associated ATPase (584 aa).

A coiled-coil region spans residues 16-91 (EELASQVRLL…KEEVDRLAQP (76 aa)). 273 to 278 (GCGKTL) is a binding site for ATP. Residues 583-584 (YL) form a docks into pockets in the proteasome alpha-ring region.

The protein belongs to the AAA ATPase family. In terms of assembly, homohexamer. Assembles into a hexameric ring structure that caps the 20S proteasome core. Strongly interacts with the prokaryotic ubiquitin-like protein Pup through a hydrophobic interface; the interacting region of ARC lies in its N-terminal coiled-coil domain. There is one Pup binding site per ARC hexamer ring. Upon ATP-binding, the C-terminus of ARC interacts with the alpha-rings of the proteasome core, possibly by binding to the intersubunit pockets.

It functions in the pathway protein degradation; proteasomal Pup-dependent pathway. ATPase which is responsible for recognizing, binding, unfolding and translocation of pupylated proteins into the bacterial 20S proteasome core particle. May be essential for opening the gate of the 20S proteasome via an interaction with its C-terminus, thereby allowing substrate entry and access to the site of proteolysis. Thus, the C-termini of the proteasomal ATPase may function like a 'key in a lock' to induce gate opening and therefore regulate proteolysis. The polypeptide is Proteasome-associated ATPase (Nocardioides sp. (strain ATCC BAA-499 / JS614)).